A 273-amino-acid polypeptide reads, in one-letter code: Rhamnulose-1-phosphate aldolase (273 aa).

E117 is a catalytic residue. H140, H142, and H211 together coordinate Zn(2+).

The protein belongs to the aldolase class II family. RhaD subfamily. Zn(2+) serves as cofactor.

It is found in the cytoplasm. The enzyme catalyses L-rhamnulose 1-phosphate = (S)-lactaldehyde + dihydroxyacetone phosphate. The protein operates within carbohydrate degradation; L-rhamnose degradation; glycerone phosphate from L-rhamnose: step 3/3. Functionally, catalyzes the reversible cleavage of L-rhamnulose-1-phosphate to dihydroxyacetone phosphate (DHAP) and L-lactaldehyde. In Listeria monocytogenes serotype 4b (strain CLIP80459), this protein is Rhamnulose-1-phosphate aldolase.